The sequence spans 429 residues: SH2 domain-containing protein 5 (429 aa).

Residues 302–398 enclose the SH2 domain; it reads WAFAGLSRSC…LSMGRLNPTY (97 aa).

In terms of assembly, interacts with BCR. Highly expressed in brain, particularly in Purkinjie cells in the cerebellum and the cornu ammonis of the hippocampus.

It localises to the postsynaptic density. In terms of biological role, may be involved in synaptic plasticity regulation through the control of Rac-GTP levels. In Mus musculus (Mouse), this protein is SH2 domain-containing protein 5.